Here is an 889-residue protein sequence, read N- to C-terminus: 97 kDa heat shock protein (889 aa).

2 disordered regions span residues 504–622 (EDAM…ATTD) and 812–889 (FVCD…MELD). Basic and acidic residues predominate over residues 549–585 (SADKEEQADNGSKETSKDSKDQTSESSKSDKESKDQN). The segment covering 586–597 (SEGSKSDNSSTE) has biased composition (polar residues). The segment covering 869–889 (ASKEGETKPDETKPDVEMELD) has biased composition (basic and acidic residues).

It belongs to the heat shock protein 70 family.

Cell surface recognition protein that binds acrosome-reacted sperm and thereby mediates binding and subsequent fusion of the sperm and egg. This Strongylocentrotus purpuratus (Purple sea urchin) protein is 97 kDa heat shock protein.